We begin with the raw amino-acid sequence, 2003 residues long: Histone acetyltransferase KAT6A (2003 aa).

The region spanning 1-77 (MVKLANPLYT…LNSYKDPDNP (77 aa)) is the SAMD1-like winged helix (WH) domain. The segment at 1-144 (MVKLANPLYT…CGGSAAPGFH (144 aa)) is required for activation of RUNX1-1. The required for nuclear localization stretch occupies residues 52–166 (ELSVKDGTIL…HGRLLKDGPL (115 aa)). The 77-residue stretch at 95 to 171 (QSVDWNKLLK…KDGPLYRLNT (77 aa)) folds into the H15 domain. The tract at residues 144–663 (HQQLRLAIKR…RKGYGRFLID (520 aa)) is interaction with PML. K172 is modified (N6-acetyllysine). 2 PHD-type zinc fingers span residues 206 to 265 (IPIC…CKTC) and 262 to 313 (CKTC…CRPR). Residues 312 to 663 (PRKKGRKLLQ…RKGYGRFLID (352 aa)) are interaction with RUNX1-1. Positions 336-377 (GRPKNRLKKQNTVSKGPFSKVRTGPGRGRKRKITVSSQSASS) are disordered. N6-acetyllysine occurs at positions 350 and 355. T369 is modified (phosphothreonine; by PKB/AKT1). Position 419 is a phosphoserine (S419). A disordered region spans residues 439 to 466 (RKKGNRKSSTSDWPTDNQDGWESKQENE). The segment covering 445–458 (KSSTSDWPTDNQDG) has biased composition (polar residues). A Phosphoserine modification is found at S472. A catalytic region spans residues 487–777 (IQEQALQKVG…VDPECLRWTP (291 aa)). The MYST-type HAT domain occupies 503–777 (PQVRCPSVIE…VDPECLRWTP (275 aa)). The interval 506 to 809 (RCPSVIEFGK…EPQGQERELE (304 aa)) is mediates interaction with BRPF1, required for histone H3 acetyltransferase activity. Residues 536-561 (LYLCEFCLKYMKSRTILQQHMKKCGW) form a C2HC MYST-type zinc finger. K603 bears the N6-acetyllysine; by autocatalysis mark. Acetyl-CoA is bound by residues 644–648 (SCIMI) and 653–659 (QRKGYGR). Residue E679 is the Proton donor/acceptor of the active site. S683 is a binding site for acetyl-CoA. Residues 784 to 939 (VVSEDEDEEA…DGKPDIPKGR (156 aa)) form a disordered region. A Phosphoserine modification is found at S786. Positions 786–798 (SEDEDEEADEGEK) are enriched in acidic residues. Basic and acidic residues predominate over residues 799 to 841 (EEPQGQERELETRVKVGKSVSREKKDQESSSLIETDKKPEVKE). An N6-acetyllysine mark is found at K813 and K816. Residue K836 forms a Glycyl lysine isopeptide (Lys-Gly) (interchain with G-Cter in SUMO2) linkage. Over residues 866 to 875 (RRGRCGRKNR) the composition is skewed to basic residues. Basic and acidic residues predominate over residues 876–890 (KTQERFGDKDSKMLV). The residue at position 901 (Y901) is a Phosphotyrosine. Positions 904–917 (CEEKSETSQERFTE) are enriched in basic and acidic residues. S941 and S954 each carry phosphoserine. The disordered stretch occupies residues 983-1083 (GFSESSEEEE…EEEESELFPR (101 aa)). Residue K1007 is modified to N6-acetyllysine. Positions 1009–1030 (TLKRKKPILHRRRRVRKRKHHN) are enriched in basic residues. Positions 1031–1042 (SSVVTETISETT) are enriched in low complexity. Composition is skewed to acidic residues over residues 1043 to 1053 (EVLDEPFEDSD) and 1065 to 1079 (FEME…EESE). S1090, S1091, and S1115 each carry phosphoserine. 5 disordered regions span residues 1096–1174 (RCQS…RKPG), 1197–1438 (IKPG…GAYQ), 1455–1533 (HTDE…PSVS), 1546–1568 (DLGS…STMG), and 1631–1707 (TCVV…CSMN). Residues 1107–1120 (EEEEEEEESDDADD) show a composition bias toward acidic residues. The segment covering 1136–1147 (NSASLEPDTSTP) has biased composition (polar residues). A compositionally biased stretch (basic residues) spans 1148 to 1174 (MKKKKGWPKGKSRKPIHWKKRPGRKPG). Positions 1204–1229 (RTQENEEIVEVKEDLLEERKEEMHTE) are enriched in basic and acidic residues. Acidic residues-rich tracts occupy residues 1230 to 1241 (PDEEAEEEEDTT) and 1282 to 1299 (EEPQ…DEVT). Residues 1317–1334 (HLDSLKTKEPEEQPARED) are compositionally biased toward basic and acidic residues. K1336 is covalently cross-linked (Glycyl lysine isopeptide (Lys-Gly) (interchain with G-Cter in SUMO2)). Composition is skewed to basic and acidic residues over residues 1352–1361 (DSRENTKDKD) and 1393–1414 (DSNT…HSEL). Residues 1473–1490 (HNSPISSIPSHPSQSVRS) are compositionally biased toward low complexity. Composition is skewed to polar residues over residues 1502–1523 (GYTQ…NMET) and 1550–1568 (IEST…STMG). The interaction with RUNX1-2 stretch occupies residues 1511 to 1636 (GSLSAPSMQN…KSPQTCVVER (126 aa)). Residues 1511–1740 (GSLSAPSMQN…YERIPGDFGA (230 aa)) form an interaction with PML region. Composition is skewed to pro residues over residues 1640-1673 (NQQP…PPQP) and 1682-1698 (QPPP…PQQQ). The segment at 1912–1947 (SMNMNTLNAMNSYRMTQPMMNSSYHSNPAYMNQTAQ) is required for activation of RUNX1-2.

It belongs to the MYST (SAS/MOZ) family. As to quaternary structure, component of the MOZ/MORF complex composed at least of ING5, KAT6A, KAT6B, MEAF6 and one of BRPF1, BRD1/BRPF2 and BRPF3. Interacts with RUNX2. Interacts with RUNX1; phosphorylation of RUNX1 enhances the interaction. Interacts with p53/TP53. Interacts with PML and this interaction positively regulates its acetylation activity towards p53/TP53. Post-translationally, autoacetylated. Autoacetylation at Lys-603 is required for proper function. Phosphorylation at Thr-369 by PKB/AKT1 inhibits its interaction with PML and negatively regulates its acetylation activity towards p53/TP53.

Its subcellular location is the nucleus. It localises to the nucleolus. The protein resides in the nucleoplasm. It is found in the PML body. It carries out the reaction L-lysyl-[protein] + acetyl-CoA = N(6)-acetyl-L-lysyl-[protein] + CoA + H(+). Functionally, histone acetyltransferase that acetylates lysine residues in histone H3 and histone H4 (in vitro). Component of the MOZ/MORF complex which has a histone H3 acetyltransferase activity. May act as a transcriptional coactivator for RUNX1 and RUNX2. Acetylates p53/TP53 at 'Lys-120' and 'Lys-382' and controls its transcriptional activity via association with PML. The chain is Histone acetyltransferase KAT6A (Kat6a) from Mus musculus (Mouse).